Reading from the N-terminus, the 437-residue chain is Transcription factor AP-2-alpha (437 aa).

Lys10 is covalently cross-linked (Glycyl lysine isopeptide (Lys-Gly) (interchain with G-Cter in SUMO); alternate). A Glycyl lysine isopeptide (Lys-Gly) (interchain with G-Cter in SUMO2); alternate cross-link involves residue Lys10. The disordered stretch occupies residues 14–107 (CEDRHDGASN…GQRQSQESGL (94 aa)). Positions 57–62 (YFPPPY) match the PPxY motif motif. Composition is skewed to low complexity over residues 65-74 (IYPQSQDPYS) and 88-101 (QPQPQHPGWPGQRQ). Glycyl lysine isopeptide (Lys-Gly) (interchain with G-Cter in SUMO2) cross-links involve residues Lys177 and Lys184. Ser239 carries the phosphoserine; by PKA modification. Positions 280 to 410 (RRKAANVTLL…YLTEALKAMD (131 aa)) are H-S-H (helix-span-helix), dimerization. The segment covering 414-427 (LSNNPNSHTDNNAK) has biased composition (polar residues). Residues 414 to 437 (LSNNPNSHTDNNAKSSDKEEKHRK) are disordered. Residues 428–437 (SSDKEEKHRK) are compositionally biased toward basic and acidic residues.

Belongs to the AP-2 family. As to quaternary structure, binds DNA as a dimer. Can form homodimers or heterodimers with other AP-2 family members. Interacts with WWOX. Interacts with CITED4. Interacts with UBE2I. Interacts with RALBP1 in a complex also containing EPN1 and NUMB during interphase and mitosis. Interacts with KCTD1; this interaction represses transcription activation. Interacts (via C-terminus) with CITED2 (via C-terminus); the interaction stimulates TFAP2A-transcriptional activation. Interacts (via N-terminus) with EP300 (via N-terminus); the interaction requires CITED2. Interacts with KCTD15; this interaction inhibits TFAP2A transcriptional activation. Sumoylated on Lys-10; which inhibits transcriptional activity.

The protein localises to the nucleus. In terms of biological role, sequence-specific DNA-binding protein that interacts with inducible viral and cellular enhancer elements to regulate transcription of selected genes. AP-2 factors bind to the consensus sequence 5'-GCCNNNGGC-3' and activate genes involved in a large spectrum of important biological functions including proper eye, face, body wall, limb and neural tube development. They also suppress a number of genes including MCAM/MUC18, C/EBP alpha and MYC. AP-2-alpha is the only AP-2 protein required for early morphogenesis of the lens vesicle. Together with the CITED2 coactivator, stimulates the PITX2 P1 promoter transcription activation. Associates with chromatin to the PITX2 P1 promoter region. The protein is Transcription factor AP-2-alpha (TFAP2A) of Bos taurus (Bovine).